The following is an 85-amino-acid chain: Probable dolichol-phosphate mannosyltransferase subunit 3 (85 aa).

2 helical membrane-spanning segments follow: residues 13-33 (VLLVLVWLLAYTEVVPVLSYI) and 37-57 (AHCLVYYIYAAFNVIYGVATF).

Belongs to the DPM3 family.

The protein localises to the endoplasmic reticulum membrane. Its pathway is protein modification; protein glycosylation. Its function is as follows. Stabilizer subunit of the dolichol-phosphate-mannose synthase complex. This Caenorhabditis briggsae protein is Probable dolichol-phosphate mannosyltransferase subunit 3.